The primary structure comprises 793 residues: Flavin carrier protein 1 (793 aa).

The signal sequence occupies residues methionine 1 to alanine 21. At lysine 22–glutamine 163 the chain is on the lumenal side. The N-linked (GlcNAc...) asparagine glycan is linked to asparagine 143. A helical transmembrane segment spans residues isoleucine 164–leucine 184. The Cytoplasmic segment spans residues serine 185–serine 194. A helical membrane pass occupies residues histidine 195–methionine 215. Topologically, residues glutamine 216–proline 223 are lumenal. The helical transmembrane segment at isoleucine 224 to methionine 244 threads the bilayer. Residues glutamine 245–arginine 249 lie on the Cytoplasmic side of the membrane. The helical transmembrane segment at tryptophan 250–threonine 272 threads the bilayer. Residues glutamine 273 to alanine 317 lie on the Lumenal side of the membrane. Asparagine 281 is a glycosylation site (N-linked (GlcNAc...) asparagine). A helical membrane pass occupies residues isoleucine 318–methionine 338. Residues alanine 339–serine 372 are Cytoplasmic-facing. Residues leucine 373–threonine 393 form a helical membrane-spanning segment. Residues glutamate 394–serine 397 are Lumenal-facing. The chain crosses the membrane as a helical span at residues alanine 398–alanine 418. The Cytoplasmic portion of the chain corresponds to alanine 419 to histidine 461. The helical transmembrane segment at tyrosine 462–alanine 482 threads the bilayer. Residues glutamine 483–alanine 484 lie on the Lumenal side of the membrane. Residues serine 485–isoleucine 505 form a helical membrane-spanning segment. At arginine 506–asparagine 516 the chain is on the cytoplasmic side. The helical transmembrane segment at isoleucine 517–serine 537 threads the bilayer. Over asparagine 538–glycine 551 the chain is Lumenal. A helical transmembrane segment spans residues tryptophan 552 to phenylalanine 572. The Cytoplasmic portion of the chain corresponds to threonine 573 to leucine 793. The residue at position 610 (serine 610) is a Phosphoserine. Residue threonine 626 is modified to Phosphothreonine. Disordered stretches follow at residues tyrosine 649 to serine 674 and lysine 689 to glutamate 731. Positions isoleucine 701–serine 719 are enriched in polar residues. Residues serine 771 and serine 774 each carry the phosphoserine modification.

The protein belongs to the transient receptor potential (TRP) ion channel family.

Its subcellular location is the endoplasmic reticulum membrane. Its function is as follows. May be responsible for the transport of FAD into the endoplasmic reticulum lumen, where it is required for oxidative protein folding. This is Flavin carrier protein 1 (FLC1) from Saccharomyces cerevisiae (strain ATCC 204508 / S288c) (Baker's yeast).